The following is a 495-amino-acid chain: Chromosomal replication initiator protein DnaA (495 aa).

Residues 1–83 form a domain I, interacts with DnaA modulators region; the sequence is MSVALWQQCL…KVQLTVGSRR (83 aa). Residues 83–158 form a domain II region; that stretch reads RNVAMSSPRD…QVEGSLKHQS (76 aa). Residues 86 to 127 form a disordered region; the sequence is AMSSPRDLGAPVSATTMNASRPTEAPAVHAAPRAKGDYADEQ. A domain III, AAA+ region region spans residues 159–375; the sequence is GLNPNFTFET…GALKKVIADS (217 aa). ATP-binding residues include glycine 203, glycine 205, lysine 206, and threonine 207. The domain IV, binds dsDNA stretch occupies residues 376 to 495; sequence HFMGKPITQD…YKNLLRLLTS (120 aa).

The protein belongs to the DnaA family. Oligomerizes as a right-handed, spiral filament on DNA at oriC.

It is found in the cytoplasm. Its function is as follows. Plays an essential role in the initiation and regulation of chromosomal replication. ATP-DnaA binds to the origin of replication (oriC) to initiate formation of the DNA replication initiation complex once per cell cycle. Binds the DnaA box (a 9 base pair repeat at the origin) and separates the double-stranded (ds)DNA. Forms a right-handed helical filament on oriC DNA; dsDNA binds to the exterior of the filament while single-stranded (ss)DNA is stabiized in the filament's interior. The ATP-DnaA-oriC complex binds and stabilizes one strand of the AT-rich DNA unwinding element (DUE), permitting loading of DNA polymerase. After initiation quickly degrades to an ADP-DnaA complex that is not apt for DNA replication. Binds acidic phospholipids. This Chromohalobacter salexigens (strain ATCC BAA-138 / DSM 3043 / CIP 106854 / NCIMB 13768 / 1H11) protein is Chromosomal replication initiator protein DnaA.